Here is a 470-residue protein sequence, read N- to C-terminus: Beta-Ala-Xaa dipeptidase (470 aa).

His87 contacts Zn(2+). Asp89 is a catalytic residue. Zn(2+) is bound at residue Asp119. Catalysis depends on Glu153, which acts as the Proton acceptor. Residues Glu154 and Asp177 each contribute to the Zn(2+) site. Arg350 is a substrate binding site. His439 lines the Zn(2+) pocket.

The protein belongs to the peptidase M20A family. It depends on Zn(2+) as a cofactor.

It is found in the cytoplasm. Its activity is regulated as follows. Fully inhibited by 1,10-phenanthroline or EDTA. Functionally, is a relatively unspecific dipeptidase cleaving a variety of dipeptides, notably those with an N-terminal beta-Ala or D-Ala residue, e.g. carnosine (beta-Ala-His). To a lesser extent, also shows aminopeptidase activity, since it is able to catalyze the removal of the N-terminal amino acid from a few distinct tripeptides. The chain is Beta-Ala-Xaa dipeptidase (pepV) from Lactobacillus delbrueckii subsp. lactis.